The primary structure comprises 355 residues: Protein DVR-1 (355 aa).

The N-terminal stretch at 1–15 (MFLVLLRACLLTLSL) is a signal peptide. A propeptide spanning residues 16-240 (CSPAEDDGLV…PLQCRSRRKR (225 aa)) is cleaved from the precursor. N-linked (GlcNAc...) asparagine glycans are attached at residues asparagine 108, asparagine 179, and asparagine 296. Cystine bridges form between cysteine 254/cysteine 320, cysteine 283/cysteine 352, and cysteine 287/cysteine 354.

Belongs to the TGF-beta family. As to quaternary structure, homodimer. Abundant in ovaries and eggs, and equally distributed among all blastomeres.

Its subcellular location is the secreted. In terms of biological role, serves to facilitate the differentiation of either mesoderm or endoderm either as a cofactor in an instructive signal or by providing permissive environment. The sequence is that of Protein DVR-1 (dvr1) from Danio rerio (Zebrafish).